The primary structure comprises 152 residues: Regulatory protein RecX (152 aa).

Belongs to the RecX family.

It is found in the cytoplasm. In terms of biological role, modulates RecA activity. This chain is Regulatory protein RecX, found in Haemophilus influenzae (strain 86-028NP).